A 417-amino-acid chain; its full sequence is MSGFKSDFLRTLSERGFIHQISDESGLDELLAKETVTAYIGFDPTAPSLHAGGLIQIMMLYWLQQTGHKPVALMGGGTGMVGDPSFKDEARKLMTEDTIAENMASIKRVFANYLTFGDGANDALMVNNGEWLRNINYLEFLRDVGRHFSVNRMLSFDSVKLRLDREQSLSFLEFNYMILQAYDFVELNKRYGLRLQMGGSDQWGNIVNGIDLGHRMGTPQLYALTSPLLTTASGQKMGKSLGGAIWLNADMLSAYDFWQYWRNTEDADVERFLKLYTTLPLDEIARLAELGGAEINEAKKILATEVTAMLHGRDAAEEAAETARKTFEDGELSENLPTVGVHKATLNDGIGVLALMVLAELCTTNGEARRHVEGGAVRINDEPVSDPRMVVNAAALNDQGLIKLSLGKKRHVLIRPA.

Tyrosine 39 is an L-tyrosine binding site. A 'HIGH' region motif is present at residues 44–53 (PTAPSLHAGG). Positions 176 and 180 each coordinate L-tyrosine. The short motif at 236–240 (KMGKS) is the 'KMSKS' region element. Residue lysine 239 coordinates ATP. The S4 RNA-binding domain maps to 350–417 (IGVLALMVLA…KKRHVLIRPA (68 aa)).

Belongs to the class-I aminoacyl-tRNA synthetase family. TyrS type 1 subfamily. Homodimer.

It localises to the cytoplasm. It carries out the reaction tRNA(Tyr) + L-tyrosine + ATP = L-tyrosyl-tRNA(Tyr) + AMP + diphosphate + H(+). Its function is as follows. Catalyzes the attachment of tyrosine to tRNA(Tyr) in a two-step reaction: tyrosine is first activated by ATP to form Tyr-AMP and then transferred to the acceptor end of tRNA(Tyr). This Brucella abortus (strain 2308) protein is Tyrosine--tRNA ligase.